The sequence spans 121 residues: Large ribosomal subunit protein uL18 (121 aa).

It belongs to the universal ribosomal protein uL18 family. In terms of assembly, part of the 50S ribosomal subunit; part of the 5S rRNA/L5/L18/L25 subcomplex. Contacts the 5S and 23S rRNAs.

In terms of biological role, this is one of the proteins that bind and probably mediate the attachment of the 5S RNA into the large ribosomal subunit, where it forms part of the central protuberance. This Ureaplasma urealyticum serovar 10 (strain ATCC 33699 / Western) protein is Large ribosomal subunit protein uL18.